The sequence spans 461 residues: Sensor histidine kinase MctS (461 aa).

Transmembrane regions (helical) follow at residues 7-27 (IIAL…TFIT) and 203-223 (FVIV…TCML). Phosphohistidine; by autocatalysis is present on His-259. Positions 360 to 450 (LYRVAQEAFN…TLTAMMPKSA (91 aa)) constitute a Histidine kinase domain.

It is found in the cell membrane. It carries out the reaction ATP + protein L-histidine = ADP + protein N-phospho-L-histidine.. Member of the two-component regulatory system MctS/MctR, which activates mctP expression. The chain is Sensor histidine kinase MctS from Rhizobium johnstonii (strain DSM 114642 / LMG 32736 / 3841) (Rhizobium leguminosarum bv. viciae).